The sequence spans 474 residues: Glycogen synthase (474 aa).

Residue Lys-15 coordinates ADP-alpha-D-glucose.

This sequence belongs to the glycosyltransferase 1 family. Bacterial/plant glycogen synthase subfamily.

The catalysed reaction is [(1-&gt;4)-alpha-D-glucosyl](n) + ADP-alpha-D-glucose = [(1-&gt;4)-alpha-D-glucosyl](n+1) + ADP + H(+). It participates in glycan biosynthesis; glycogen biosynthesis. Synthesizes alpha-1,4-glucan chains using ADP-glucose. The chain is Glycogen synthase from Chlamydia muridarum (strain MoPn / Nigg).